Reading from the N-terminus, the 388-residue chain is Methylthioribose-1-phosphate isomerase (388 aa).

The active-site Proton donor is D253.

Belongs to the eIF-2B alpha/beta/delta subunits family. MtnA subfamily.

It localises to the cytoplasm. It is found in the nucleus. The catalysed reaction is 5-(methylsulfanyl)-alpha-D-ribose 1-phosphate = 5-(methylsulfanyl)-D-ribulose 1-phosphate. The protein operates within amino-acid biosynthesis; L-methionine biosynthesis via salvage pathway; L-methionine from S-methyl-5-thio-alpha-D-ribose 1-phosphate: step 1/6. Its function is as follows. Catalyzes the interconversion of methylthioribose-1-phosphate (MTR-1-P) into methylthioribulose-1-phosphate (MTRu-1-P). In Fusarium vanettenii (strain ATCC MYA-4622 / CBS 123669 / FGSC 9596 / NRRL 45880 / 77-13-4) (Fusarium solani subsp. pisi), this protein is Methylthioribose-1-phosphate isomerase.